The primary structure comprises 957 residues: Glycine dehydrogenase (decarboxylating) (957 aa).

Residue K708 is modified to N6-(pyridoxal phosphate)lysine.

This sequence belongs to the GcvP family. As to quaternary structure, the glycine cleavage system is composed of four proteins: P, T, L and H. The cofactor is pyridoxal 5'-phosphate.

The catalysed reaction is N(6)-[(R)-lipoyl]-L-lysyl-[glycine-cleavage complex H protein] + glycine + H(+) = N(6)-[(R)-S(8)-aminomethyldihydrolipoyl]-L-lysyl-[glycine-cleavage complex H protein] + CO2. In terms of biological role, the glycine cleavage system catalyzes the degradation of glycine. The P protein binds the alpha-amino group of glycine through its pyridoxal phosphate cofactor; CO(2) is released and the remaining methylamine moiety is then transferred to the lipoamide cofactor of the H protein. This chain is Glycine dehydrogenase (decarboxylating), found in Shigella flexneri.